Consider the following 317-residue polypeptide: tRNA dimethylallyltransferase (317 aa).

ATP is bound at residue 14–21 (GPTAVGKT). 16 to 21 (TAVGKT) contacts substrate. Residues 39 to 42 (DSMQ) form an interaction with substrate tRNA region.

The protein belongs to the IPP transferase family. As to quaternary structure, monomer. Mg(2+) is required as a cofactor.

It catalyses the reaction adenosine(37) in tRNA + dimethylallyl diphosphate = N(6)-dimethylallyladenosine(37) in tRNA + diphosphate. In terms of biological role, catalyzes the transfer of a dimethylallyl group onto the adenine at position 37 in tRNAs that read codons beginning with uridine, leading to the formation of N6-(dimethylallyl)adenosine (i(6)A). This Bacillus cereus (strain G9842) protein is tRNA dimethylallyltransferase.